A 441-amino-acid chain; its full sequence is GPI mannosyltransferase 2 (441 aa).

10 consecutive transmembrane segments (helical) span residues 4–24 (MTVL…LILV), 35–55 (ILFG…PGLG), 115–135 (LLAL…IFGG), 143–163 (LCFL…LSAP), 165–185 (GEAL…SSVL), 199–223 (LLAA…GVLF), 249–269 (VIVL…YIAF), 306–326 (YWVV…ALLL), 361–381 (LAII…VQII), and 418–438 (VAVQ…GSFL).

This sequence belongs to the PIGV family.

Its subcellular location is the endoplasmic reticulum membrane. The protein operates within glycolipid biosynthesis; glycosylphosphatidylinositol-anchor biosynthesis. Mannosyltransferase involved in glycosylphosphatidylinositol-anchor biosynthesis. Transfers the second mannose to the glycosylphosphatidylinositol during GPI precursor assembly. This is GPI mannosyltransferase 2 (gpi18) from Aspergillus fumigatus (strain ATCC MYA-4609 / CBS 101355 / FGSC A1100 / Af293) (Neosartorya fumigata).